Consider the following 200-residue polypeptide: Holliday junction resolvase RecU (200 aa).

Residues Thr82, Asp84, Glu97, and Gln116 each coordinate Mg(2+).

It belongs to the RecU family. It depends on Mg(2+) as a cofactor.

Its subcellular location is the cytoplasm. It catalyses the reaction Endonucleolytic cleavage at a junction such as a reciprocal single-stranded crossover between two homologous DNA duplexes (Holliday junction).. Its function is as follows. Endonuclease that resolves Holliday junction intermediates in genetic recombination. Cleaves mobile four-strand junctions by introducing symmetrical nicks in paired strands. Promotes annealing of linear ssDNA with homologous dsDNA. Required for DNA repair, homologous recombination and chromosome segregation. This is Holliday junction resolvase RecU from Streptococcus gordonii (strain Challis / ATCC 35105 / BCRC 15272 / CH1 / DL1 / V288).